A 430-amino-acid chain; its full sequence is Tol-Pal system protein TolB (430 aa).

The first 21 residues, 1-21, serve as a signal peptide directing secretion; sequence MKQAFRVALGFLVLWASVLHA.

It belongs to the TolB family. In terms of assembly, the Tol-Pal system is composed of five core proteins: the inner membrane proteins TolA, TolQ and TolR, the periplasmic protein TolB and the outer membrane protein Pal. They form a network linking the inner and outer membranes and the peptidoglycan layer.

It localises to the periplasm. Its function is as follows. Part of the Tol-Pal system, which plays a role in outer membrane invagination during cell division and is important for maintaining outer membrane integrity. TolB occupies a key intermediary position in the Tol-Pal system because it communicates directly with both membrane-embedded components, Pal in the outer membrane and TolA in the inner membrane. The protein is Tol-Pal system protein TolB of Yersinia enterocolitica serotype O:8 / biotype 1B (strain NCTC 13174 / 8081).